Consider the following 1346-residue polypeptide: Adhesion G protein-coupled receptor A3 (1346 aa).

A signal peptide spans 1–21 (MSVLCVLLLAFVLPLRGSSSA). The disordered stretch occupies residues 18–45 (SSSAGSTECKTYDERSRSAGKSSPSGAT). Residues 22–739 (GSTECKTYDE…NVFIFRPLHP (718 aa)) are Extracellular-facing. 4 LRR repeats span residues 66 to 90 (FPNRTVSLILSNNKIQELLNGSFVG), 91 to 114 (LSSLERLDIKNNIITHIEPGAFYG), 116 to 138 (FSLKRLDLSKNLIGCLHVDVFKG), and 139 to 162 (LTNLVKLNLSENKFSSLSQGIFDS). Residues 176-223 (LLCDCNLQWLVVWIKEKAIGVKETRCSFPRSLQGQLITTLRAETLTCD) enclose the LRRCT domain. In terms of domain architecture, Ig-like spans 229–327 (PSFQMTPSQH…GNNTRTVHIV (99 aa)). A disulfide bond links cysteine 251 and cysteine 311. LRR repeat units follow at residues 503–529 (LQRIALLRVSNGALAYSTNSPNIALEA), 574–600 (TSNLSALALKNTIVEASLQLPPTLFSS), and 611–632 (VYKLHLLAFRNGKLFPPTGNSS). The 166-residue stretch at 563 to 728 (PERQLSFKCN…AVLMDLNRTG (166 aa)) folds into the GAIN-B domain. Residues 679–728 (PAFWNFSLQGGQGGWQSDGCRILHQDDNFTTVSCHSLNSYAVLMDLNRTG) form a GPS region. Cysteine 698 and cysteine 712 are oxidised to a cystine. The chain crosses the membrane as a helical span at residues 740–760 (VIYSTALVLVLCLLSVIVSYI). At 761–773 (YHHKSVRISKKCW) the chain is on the cytoplasmic side. Residues 774 to 794 (HMLVNLCLHILLTCAVFVGGI) form a helical membrane-spanning segment. The Extracellular segment spans residues 795–804 (NQTYNASVCQ). The chain crosses the membrane as a helical span at residues 805–825 (AMGIVLHYSTLATALWSGVTA). Topologically, residues 826–854 (RNIYKQVTRKAKRYEELDEPPPPPRPMLR) are cytoplasmic. A helical transmembrane segment spans residues 855–875 (FYLIGGGIPIIVCGITAAANI). Residues 876–897 (KNYGSQVNAPYCWMAWEPSLGA) lie on the Extracellular side of the membrane. The chain crosses the membrane as a helical span at residues 898-918 (FYGPAAFIVFVDCMYFLSILI). Residues 919-977 (QLRRHPERRFELKEQSEEQQHLSVTEATEITPVHLESSPTAQPVPMSALENEHTFVSQL) are Cytoplasmic-facing. The chain crosses the membrane as a helical span at residues 978–998 (MGVAGSLTLYAALWVFGALAI). At 999–1005 (SQEHPAD) the chain is on the extracellular side. A helical membrane pass occupies residues 1006–1026 (LVFACLFGALALGLGAFLVAH). The Cytoplasmic segment spans residues 1027 to 1346 (HCVNRQDMRR…TGLWKHETTV (320 aa)). Residues 1157–1169 (SVNNNNLPGNANI) are compositionally biased toward polar residues. Disordered stretches follow at residues 1157 to 1188 (SVNNNNLPGNANITGHPGRHHKNRSRAHRASR) and 1202 to 1284 (SVEG…DGSE). 2 stretches are compositionally biased toward basic residues: residues 1173 to 1187 (PGRHHKNRSRAHRAS) and 1212 to 1226 (NKRHHHESLHARNSR). A compositionally biased stretch (low complexity) spans 1238–1252 (QSQLQQDSSDAASTS). The segment covering 1266-1280 (IGNGFGHGISNGGLL) has biased composition (gly residues). The PDZ-binding signature appears at 1344-1346 (TTV).

This sequence belongs to the G-protein coupled receptor 2 family. Adhesion G-protein coupled receptor (ADGR) subfamily. Interacts (via PDZ-binding motif) with disheveled proteins; leading to the localization of dishevelled proteins to specific membrane subdomains. As to expression, ubiquitously expressed at very low levels.

The protein localises to the cell membrane. Its function is as follows. Orphan receptor that acts as a critical modulator of planar cell polarity during gastrulation. Controls the localization of dishevelled. This is Adhesion G protein-coupled receptor A3 (adgra3) from Danio rerio (Zebrafish).